The following is a 160-amino-acid chain: Peptide methionine sulfoxide reductase MsrA (160 aa).

The active site involves Cys11.

Belongs to the MsrA Met sulfoxide reductase family.

It catalyses the reaction L-methionyl-[protein] + [thioredoxin]-disulfide + H2O = L-methionyl-(S)-S-oxide-[protein] + [thioredoxin]-dithiol. The catalysed reaction is [thioredoxin]-disulfide + L-methionine + H2O = L-methionine (S)-S-oxide + [thioredoxin]-dithiol. In terms of biological role, has an important function as a repair enzyme for proteins that have been inactivated by oxidation. Catalyzes the reversible oxidation-reduction of methionine sulfoxide in proteins to methionine. The protein is Peptide methionine sulfoxide reductase MsrA of Malacoplasma penetrans (strain HF-2) (Mycoplasma penetrans).